The sequence spans 578 residues: Monooxygenase cfoE (578 aa).

The helical transmembrane segment at 549-569 (IVLSGVPLVVFGSLHLVLWIF) threads the bilayer.

Belongs to the FMO family. The cofactor is FAD.

The protein localises to the membrane. It participates in secondary metabolite biosynthesis; flavonoid biosynthesis. Its function is as follows. Monooxygenase; part of the gene cluster that mediates the biosynthesis of chlorflavonin, a fungal flavonoid with acetolactate synthase inhibitory activity. Within the pathway, cfoE is responsible for the chlorination of the flavonoid skeleton at position C3'. The pathway begins with the PKS-NRPS hybrid synthetase cfoA that uses benzoic acid or p-hydroxybenzoic acid as a starter unit with four rounds of chain elongation using malonyl-CoA to form the chalcone skeleton. Then, a new type of chalcone isomerase, cfoK, catalyzes the conversion of the chalcone into a flavanone by a histidine-mediated oxa-Michael addition mechanism. The desaturation of flavanone to flavone is catalyzed by a new type of flavone synthase, the flavin mononucleotide (FMN)-dependent oxidoreductase cfoJ. Monooxygenases cfoF, cfoG, and P450 cfoH are responsible for the hydroxylation of the flavonoid skeleton at sites C3, C8, and C2', respectively. Like cfoF, the dehydratase cfoI plays also a role in the hydroxylation of position C3. Methyltransferases cfoB, cfoC, and cfoD then catalyze the methylation of C7-OH, C8-OH, and C3-OH, respectively. Finally, the monooxygenase cfoE is responsible for the chlorination of flavonoid at position C3'. This Aspergillus candidus protein is Monooxygenase cfoE.